The chain runs to 351 residues: Protein Wnt-4 (351 aa).

The signal sequence occupies residues 1–22 (MSPRSCLRSLRLLVFAVFSAAA). Cystine bridges form between Cys78/Cys89, Cys128/Cys136, Cys138/Cys155, Cys206/Cys220, Cys208/Cys215, Cys280/Cys311, Cys296/Cys306, Cys310/Cys350, Cys326/Cys341, Cys328/Cys338, and Cys333/Cys334. Asn88 carries an N-linked (GlcNAc...) asparagine glycan. Residue Ser212 is the site of O-palmitoleoyl serine; by PORCN attachment. N-linked (GlcNAc...) asparagine glycosylation is present at Asn297.

It belongs to the Wnt family. In terms of assembly, interacts with PORCN. Interacts with PKD1. In terms of processing, palmitoleoylation is required for efficient binding to frizzled receptors. Depalmitoleoylation leads to Wnt signaling pathway inhibition. In terms of tissue distribution, in adults in lung and brain.

Its subcellular location is the secreted. It localises to the extracellular space. The protein localises to the extracellular matrix. Its function is as follows. Ligand for members of the frizzled family of seven transmembrane receptors. Plays an important role in the embryonic development of the urogenital tract and the lung. Required for normal mesenchyme to epithelium transition during embryonic kidney development. Required for the formation of early epithelial renal vesicles during kidney development. Required for normal formation of the Mullerian duct in females, and normal levels of oocytes in the ovaries. Required for normal down-regulation of 3 beta-hydroxysteroid dehydrogenase in the ovary. Required for normal lung development and for normal patterning of trachael cartilage rings. This chain is Protein Wnt-4 (Wnt4), found in Mus musculus (Mouse).